The following is a 187-amino-acid chain: Ribonuclease M5 (187 aa).

Residues 5–88 enclose the Toprim domain; sequence KEVIVVEGKD…AFLPRKAGVP (84 aa). E11, D57, and D59 together coordinate Mg(2+).

Belongs to the ribonuclease M5 family. Mg(2+) serves as cofactor.

It localises to the cytoplasm. It carries out the reaction Endonucleolytic cleavage of RNA, removing 21 and 42 nucleotides, respectively, from the 5'- and 3'-termini of a 5S-rRNA precursor.. Functionally, required for correct processing of both the 5' and 3' ends of 5S rRNA precursor. Cleaves both sides of a double-stranded region yielding mature 5S rRNA in one step. The protein is Ribonuclease M5 of Lactiplantibacillus plantarum (strain ATCC BAA-793 / NCIMB 8826 / WCFS1) (Lactobacillus plantarum).